Reading from the N-terminus, the 277-residue chain is Formamidopyrimidine-DNA glycosylase (277 aa).

Residue Pro-2 is the Schiff-base intermediate with DNA of the active site. Glu-3 acts as the Proton donor in catalysis. The active-site Proton donor; for beta-elimination activity is the Lys-59. His-96, Arg-115, and Arg-158 together coordinate DNA. The FPG-type zinc finger occupies 243-277 (WVYGRGGNPCRRCGGEILREKRAGRSTHFCPRCQK). The active-site Proton donor; for delta-elimination activity is the Arg-267.

The protein belongs to the FPG family. As to quaternary structure, monomer. It depends on Zn(2+) as a cofactor.

It catalyses the reaction Hydrolysis of DNA containing ring-opened 7-methylguanine residues, releasing 2,6-diamino-4-hydroxy-5-(N-methyl)formamidopyrimidine.. It carries out the reaction 2'-deoxyribonucleotide-(2'-deoxyribose 5'-phosphate)-2'-deoxyribonucleotide-DNA = a 3'-end 2'-deoxyribonucleotide-(2,3-dehydro-2,3-deoxyribose 5'-phosphate)-DNA + a 5'-end 5'-phospho-2'-deoxyribonucleoside-DNA + H(+). Involved in base excision repair of DNA damaged by oxidation or by mutagenic agents. Acts as a DNA glycosylase that recognizes and removes damaged bases. Has a preference for oxidized purines, such as 7,8-dihydro-8-oxoguanine (8-oxoG). Has AP (apurinic/apyrimidinic) lyase activity and introduces nicks in the DNA strand. Cleaves the DNA backbone by beta-delta elimination to generate a single-strand break at the site of the removed base with both 3'- and 5'-phosphates. The chain is Formamidopyrimidine-DNA glycosylase from Heliobacterium modesticaldum (strain ATCC 51547 / Ice1).